We begin with the raw amino-acid sequence, 189 residues long: Peptidyl-tRNA hydrolase (189 aa).

Residue tyrosine 15 coordinates tRNA. The Proton acceptor role is filled by histidine 20. TRNA contacts are provided by phenylalanine 66, asparagine 68, and asparagine 114.

Belongs to the PTH family. In terms of assembly, monomer.

It localises to the cytoplasm. It catalyses the reaction an N-acyl-L-alpha-aminoacyl-tRNA + H2O = an N-acyl-L-amino acid + a tRNA + H(+). Functionally, hydrolyzes ribosome-free peptidyl-tRNAs (with 1 or more amino acids incorporated), which drop off the ribosome during protein synthesis, or as a result of ribosome stalling. In terms of biological role, catalyzes the release of premature peptidyl moieties from peptidyl-tRNA molecules trapped in stalled 50S ribosomal subunits, and thus maintains levels of free tRNAs and 50S ribosomes. The polypeptide is Peptidyl-tRNA hydrolase (Streptococcus pneumoniae (strain JJA)).